Here is a 209-residue protein sequence, read N- to C-terminus: MTSTLDPVLTAADAALRTLFARPHATRAAPAPAQAPGEMTDSERREAGALMRVNHVGEVCAQALYTAQAAVARDPVLRARLLEASHEEADHLAWTRQRLDELGARPSVLNPLWYAGAFGLGLVAGRLGDPLSLGFVAETERQVEAHLESHLGRLPAADSASRAVVEQMKIDEAQHAAQAIDAGAAELPAPAKALMRLASRVMTTVAHRI.

Over residues 23 to 36 the composition is skewed to low complexity; that stretch reads PHATRAAPAPAQAP. The disordered stretch occupies residues 23-42; sequence PHATRAAPAPAQAPGEMTDS. E58, E88, H91, E140, E172, and H175 together coordinate Fe cation.

Belongs to the COQ7 family. Requires Fe cation as cofactor.

Its subcellular location is the cell membrane. It catalyses the reaction a 5-methoxy-2-methyl-3-(all-trans-polyprenyl)benzene-1,4-diol + AH2 + O2 = a 3-demethylubiquinol + A + H2O. Its pathway is cofactor biosynthesis; ubiquinone biosynthesis. In terms of biological role, catalyzes the hydroxylation of 2-nonaprenyl-3-methyl-6-methoxy-1,4-benzoquinol during ubiquinone biosynthesis. The polypeptide is 3-demethoxyubiquinol 3-hydroxylase (Variovorax paradoxus (strain S110)).